Reading from the N-terminus, the 3411-residue chain is Genome polyprotein (3411 aa).

At 1-104 (MSGRKAQGKT…LSSRKRRSHD (104 aa)) the chain is on the cytoplasmic side. Residues 38–72 (PGPSRGVQGFIFFFLFNILTGKKITAHLKRLWKML) are hydrophobic; homodimerization of capsid protein C. The propeptide at 102–121 (SHDVLTVQFLILGMLLMTGG) is ER anchor for the capsid protein C, removed in mature form by serine protease NS3. A helical membrane pass occupies residues 105 to 125 (VLTVQFLILGMLLMTGGVTLV). At 126 to 244 (RKNRWLLLNV…GERQLQKIER (119 aa)) the chain is on the extracellular side. Asparagine 134 and asparagine 150 each carry an N-linked (GlcNAc...) asparagine; by host glycan. A helical membrane pass occupies residues 245-265 (WFVRNPFFAVTALTIAYLVGS). At 266–270 (NMTQR) the chain is on the cytoplasmic side. Residues 271-285 (VVIALLVLAVGPAYS) form a helical membrane-spanning segment. Topologically, residues 286 to 730 (AHCIGITDRD…TVFGSAFQGL (445 aa)) are extracellular. 8 disulfide bridges follow: cysteine 288–cysteine 315, cysteine 345–cysteine 401, cysteine 345–cysteine 406, cysteine 359–cysteine 390, cysteine 377–cysteine 401, cysteine 377–cysteine 406, cysteine 467–cysteine 568, and cysteine 585–cysteine 615. The segment at 383–396 (DRGWGNGCGLFGKG) is fusion peptide. The chain crosses the membrane as a helical span at residues 731 to 751 (FGGLNWITKVIMGAVLIWVGI). The Extracellular segment spans residues 752 to 757 (NTRNMT). A helical transmembrane segment spans residues 758-778 (MSMSMILVGVIMMFLSLGVGA). Topologically, residues 779–1132 (DQGCAINFGK…LVRSWVTAGE (354 aa)) are extracellular. Disulfide bonds link cysteine 782–cysteine 793, cysteine 833–cysteine 921, cysteine 957–cysteine 1002, cysteine 1058–cysteine 1107, cysteine 1069–cysteine 1091, and cysteine 1090–cysteine 1094. N-linked (GlcNAc...) asparagine; by host glycans are attached at residues asparagine 908 and asparagine 986. A helical transmembrane segment spans residues 1133-1153 (IHAVPFGLVSMMIAMEVVLRK). The Cytoplasmic portion of the chain corresponds to 1154 to 1201 (RQGPKQMLVGGVVLLGAMLVGQVTLLDLLKLTVAVGLHFHEMNNGGDA). Residues 1202-1222 (MYMALIAAFSIRPGLLIGFGL) form a helical membrane-spanning segment. Over 1223–1287 (RTLWSPRERL…ILPLMALLTP (65 aa)) the chain is Lumenal. The chain crosses the membrane as a helical span at residues 1288-1308 (VTMAEVRLAAMFFCAVVIIGV). Residues 1309–1355 (LHQNFKDTSMQKTIPLVALTLTSYLGLTQPFLGLCAFLATRIFGRRS) lie on the Cytoplasmic side of the membrane. A helical transmembrane segment spans residues 1356–1376 (IPVNEALAAAGLVGVLAGLAF). Residues 1377-1378 (QE) lie on the Lumenal side of the membrane. A helical membrane pass occupies residues 1379–1399 (MENFLGPIAVGGLLMMLVSVA). At 1400–1456 (GRVDGLELKKLGEVSWEEEAEISGSSARYDVALSEQGEFKLLSEEKVPWDQVVMTSL) the chain is on the cytoplasmic side. Positions 1407-1446 (LKKLGEVSWEEEAEISGSSARYDVALSEQGEFKLLSEEKV) are interacts with and activates NS3 protease. Residues 1457–1477 (ALVGAALHPFALLLVLAGWLF) constitute an intramembrane region (helical). Residues 1478–2157 (HVRGARRSGD…RNALSMMPEA (680 aa)) lie on the Cytoplasmic side of the membrane. A Peptidase S7 domain is found at 1485-1665 (SGDVLWDIPT…EVKEEGKEEL (181 aa)). Catalysis depends on charge relay system; for serine protease NS3 activity residues histidine 1537, aspartate 1561, and serine 1622. Positions 1669-1825 (PTMLKKGMTT…HSNGEIEDVQ (157 aa)) constitute a Helicase ATP-binding domain. An important for RNA-binding region spans residues 1673-1676 (KKGM). Position 1682 to 1689 (1682 to 1689 (FHPGAGKT)) interacts with ATP. The DEAH box motif lies at 1773 to 1776 (DEAH). The region spanning 1820–1997 (EIEDVQTDIP…VRGGMVAPLY (178 aa)) is the Helicase C-terminal domain. Lysine 1877 is modified (N6-acetyllysine; by host). Residues 2158–2178 (MTIVMLFILAGLLTSGMVIFF) traverse the membrane as a helical segment. The Lumenal segment spans residues 2179–2186 (MSPKGISR). Residues 2187-2207 (MSMAMGTMAGCGYLMFLGGVK) constitute an intramembrane region (helical). Residues 2208-2209 (PT) are Lumenal-facing. A helical transmembrane segment spans residues 2210-2230 (HISYVMLIFFVLMVVVIPEPG). Topologically, residues 2231–2241 (QQRSIQDNQVA) are cytoplasmic. Residues 2242-2262 (YLIIGILTLVSAVAANELGML) form a helical membrane-spanning segment. Residues 2263 to 2293 (EKTKEDLFGKKNLIPSSASPWSWPDLDLKPG) lie on the Lumenal side of the membrane. Positions 2294–2314 (AAWTVYVGIVTMLSPMLHHWI) form an intramembrane region, helical. The Lumenal portion of the chain corresponds to 2315–2360 (KVEYGNLSLSGIAQSASVLSFMDKGIPFMKMNISVIMLLVSGWNSI). The helical transmembrane segment at 2361 to 2381 (TVMPLLCGIGCAMLHWSLILP) threads the bilayer. Residues 2382–2421 (GIKAQQSKLAQRRVFHGVAENPVVDGNPTVDIEEAPEMPA) are Cytoplasmic-facing. Residues 2422-2442 (LYEKKLALYLLLALSLASVAM) form a helical membrane-spanning segment. Topologically, residues 2443-2445 (CRT) are lumenal. Residues 2446–2466 (PFSLAEGIVLASAALGPLIEG) form a helical membrane-spanning segment. Over 2467–3411 (NTSLLWNGPM…DADLQLGELI (945 aa)) the chain is Cytoplasmic. The region spanning 2507–2771 (GSANGKTLGE…DVILPIGTRS (265 aa)) is the mRNA cap 0-1 NS5-type MT domain. Serine 2562 is a binding site for S-adenosyl-L-methionine. Phosphoserine is present on serine 2562. Catalysis depends on lysine 2567, which acts as the For 2'-O-MTase activity. The S-adenosyl-L-methionine site is built by glycine 2592, tryptophan 2593, threonine 2610, leucine 2611, aspartate 2637, and isoleucine 2638. The active-site For 2'-O-MTase activity is the aspartate 2652. Residue isoleucine 2653 coordinates S-adenosyl-L-methionine. Catalysis depends on for 2'-O-MTase activity residues lysine 2688 and glutamate 2724. Tyrosine 2726 lines the S-adenosyl-L-methionine pocket. Positions 2878–2911 (RKIMKVVNRWLFRHLAREKNPRLCTKEEFIAKVR) match the Nuclear localization signal motif. Zn(2+) contacts are provided by glutamate 2945, histidine 2949, cysteine 2954, and cysteine 2957. The RdRp catalytic domain maps to 3035–3187 (GGFYADDTAG…RPIDDRFGLA (153 aa)). Zn(2+) is bound by residues histidine 3222, cysteine 3238, and cysteine 3357.

It in the N-terminal section; belongs to the class I-like SAM-binding methyltransferase superfamily. mRNA cap 0-1 NS5-type methyltransferase family. In terms of assembly, homodimer. Interacts (via N-terminus) with host EXOC1 (via C-terminus); this interaction results in EXOC1 degradation through the proteasome degradation pathway. As to quaternary structure, forms heterodimers with envelope protein E in the endoplasmic reticulum and Golgi. Homodimer; in the endoplasmic reticulum and Golgi. Interacts with protein prM. Interacts with non-structural protein 1. In terms of assembly, homodimer; Homohexamer when secreted. Interacts with envelope protein E. As to quaternary structure, interacts (via N-terminus) with serine protease NS3. Forms a heterodimer with serine protease NS3. May form homooligomers. In terms of assembly, forms a heterodimer with NS2B. Interacts with non-structural protein 2A (via N-terminus). Interacts with NS4B. Interacts with unphosphorylated RNA-directed RNA polymerase NS5; this interaction stimulates RNA-directed RNA polymerase NS5 guanylyltransferase activity. NS3 interacts with host PDCD6IP; this interaction contributes to virion release. As to quaternary structure, interacts with serine protease NS3. Homodimer. Interacts with host STAT2; this interaction prevents the establishment of cellular antiviral state. Interacts with serine protease NS3. Interacts with host TRIM23; this interaction leads to NS5 ubiquitination. In terms of processing, specific enzymatic cleavages in vivo yield mature proteins. The nascent capsid protein C contains a C-terminal hydrophobic domain that act as a signal sequence for translocation of prM into the lumen of the ER. Mature capsid protein C is cleaved at a site upstream of this hydrophobic domain by NS3. prM is cleaved in post-Golgi vesicles by a host furin, releasing the mature small envelope protein M, and peptide pr. Non-structural protein 2A-alpha, a C-terminally truncated form of non-structural protein 2A, results from partial cleavage by NS3. Specific enzymatic cleavages in vivo yield mature proteins peptide 2K acts as a signal sequence and is removed from the N-terminus of NS4B by the host signal peptidase in the ER lumen. Signal cleavage at the 2K-4B site requires a prior NS3 protease-mediated cleavage at the 4A-2K site. Post-translationally, cleaved in post-Golgi vesicles by a host furin, releasing the mature small envelope protein M, and peptide pr. This cleavage is incomplete as up to 30% of viral particles still carry uncleaved prM. N-glycosylated. In terms of processing, N-glycosylated. The excreted form is glycosylated and this is required for efficient secretion of the protein from infected cells. Post-translationally, polyubiquitinated; ubiquitination is probably mediated by host TRIM23 and is prerequisite for NS5-STAT2 interaction. NS5 is not ISGylated or sumoylated. Acetylated by host KAT5. Acetylation modulates NS3 RNA-binding and unwinding activities and plays an important positive role for viral replication. In terms of processing, phosphorylated on serines residues. This phosphorylation may trigger NS5 nuclear localization.

The protein localises to the virion. It localises to the host nucleus. Its subcellular location is the host cytoplasm. The protein resides in the host perinuclear region. It is found in the secreted. The protein localises to the virion membrane. It localises to the host endoplasmic reticulum membrane. The enzyme catalyses Selective hydrolysis of -Xaa-Xaa-|-Yaa- bonds in which each of the Xaa can be either Arg or Lys and Yaa can be either Ser or Ala.. It catalyses the reaction RNA(n) + a ribonucleoside 5'-triphosphate = RNA(n+1) + diphosphate. The catalysed reaction is a ribonucleoside 5'-triphosphate + H2O = a ribonucleoside 5'-diphosphate + phosphate + H(+). It carries out the reaction ATP + H2O = ADP + phosphate + H(+). The enzyme catalyses a 5'-end (5'-triphosphoguanosine)-ribonucleoside in mRNA + S-adenosyl-L-methionine = a 5'-end (N(7)-methyl 5'-triphosphoguanosine)-ribonucleoside in mRNA + S-adenosyl-L-homocysteine. It catalyses the reaction a 5'-end (N(7)-methyl 5'-triphosphoguanosine)-ribonucleoside in mRNA + S-adenosyl-L-methionine = a 5'-end (N(7)-methyl 5'-triphosphoguanosine)-(2'-O-methyl-ribonucleoside) in mRNA + S-adenosyl-L-homocysteine + H(+). Functionally, plays a role in virus budding by binding to the cell membrane and gathering the viral RNA into a nucleocapsid that forms the core of a mature virus particle. During virus entry, may induce genome penetration into the host cytoplasm after hemifusion induced by the surface proteins. Can migrate to the cell nucleus where it modulates host functions. Inhibits RNA silencing by interfering with host Dicer. Its function is as follows. Prevents premature fusion activity of envelope proteins in trans-Golgi by binding to envelope protein E at pH6.0. After virion release in extracellular space, gets dissociated from E dimers. In terms of biological role, acts as a chaperone for envelope protein E during intracellular virion assembly by masking and inactivating envelope protein E fusion peptide. prM is the only viral peptide matured by host furin in the trans-Golgi network probably to avoid catastrophic activation of the viral fusion activity in acidic Golgi compartment prior to virion release. prM-E cleavage is inefficient, and many virions are only partially matured. These uncleaved prM would play a role in immune evasion. Functionally, may play a role in virus budding. Exerts cytotoxic effects by activating a mitochondrial apoptotic pathway through M ectodomain. May display a viroporin activity. Binds to host cell surface receptor and mediates fusion between viral and cellular membranes. Envelope protein is synthesized in the endoplasmic reticulum in the form of heterodimer with protein prM. They play a role in virion budding in the ER, and the newly formed immature particle is covered with 60 spikes composed of heterodimer between precursor prM and envelope protein E. The virion is transported to the Golgi apparatus where the low pH causes dissociation of PrM-E heterodimers and formation of E homodimers. prM-E cleavage is inefficient, and many virions are only partially matured. These uncleaved prM would play a role in immune evasion. Its function is as follows. Involved in immune evasion, pathogenesis and viral replication. Once cleaved off the polyprotein, is targeted to three destinations: the viral replication cycle, the plasma membrane and the extracellular compartment. Essential for viral replication. Required for formation of the replication complex and recruitment of other non-structural proteins to the ER-derived membrane structures. Excreted as a hexameric lipoparticle that plays a role against host immune response. Antagonizing the complement function. Binds to the host macrophages and dendritic cells. Inhibits signal transduction originating from Toll-like receptor 3 (TLR3). In terms of biological role, component of the viral RNA replication complex that functions in virion assembly and antagonizes the host immune response. Functionally, required cofactor for the serine protease function of NS3. May have membrane-destabilizing activity and form viroporins. Displays three enzymatic activities: serine protease, NTPase and RNA helicase. NS3 serine protease, in association with NS2B, performs its autocleavage and cleaves the polyprotein at dibasic sites in the cytoplasm: C-prM, NS2A-NS2B, NS2B-NS3, NS3-NS4A, NS4A-2K and NS4B-NS5. NS3 RNA helicase binds RNA and unwinds dsRNA in the 3' to 5' direction. Also plays a role in virus assembly. Its function is as follows. Regulates the ATPase activity of the NS3 helicase activity. NS4A allows NS3 helicase to conserve energy during unwinding. In terms of biological role, functions as a signal peptide for NS4B and is required for the interferon antagonism activity of the latter. Functionally, induces the formation of ER-derived membrane vesicles where the viral replication takes place. Inhibits interferon (IFN)-induced host STAT1 phosphorylation and nuclear translocation, thereby preventing the establishment of cellular antiviral state by blocking the IFN-alpha/beta pathway. Replicates the viral (+) and (-) RNA genome, and performs the capping of genomes in the cytoplasm. NS5 methylates viral RNA cap at guanine N-7 and ribose 2'-O positions. Besides its role in RNA genome replication, also prevents the establishment of cellular antiviral state by blocking the interferon-alpha/beta (IFN-alpha/beta) signaling pathway. IFN-I induces binding of NS5 to host IFN-activated transcription factor STAT2, preventing its transcriptional activity. Host TRIM23 is the E3 ligase that interacts with and polyubiquitinates NS5 to promote its binding to STAT2 and trigger IFN-I signaling inhibition. This is Genome polyprotein from Aedes aegypti (Yellowfever mosquito).